The primary structure comprises 219 residues: Ribose-5-phosphate isomerase A (219 aa).

Substrate is bound by residues 28–31 (TGST), 81–84 (DSAD), and 94–97 (KGGG). E103 functions as the Proton acceptor in the catalytic mechanism. Residue K121 participates in substrate binding.

The protein belongs to the ribose 5-phosphate isomerase family. In terms of assembly, homodimer.

The catalysed reaction is aldehydo-D-ribose 5-phosphate = D-ribulose 5-phosphate. Its pathway is carbohydrate degradation; pentose phosphate pathway; D-ribose 5-phosphate from D-ribulose 5-phosphate (non-oxidative stage): step 1/1. Its function is as follows. Catalyzes the reversible conversion of ribose-5-phosphate to ribulose 5-phosphate. The chain is Ribose-5-phosphate isomerase A from Buchnera aphidicola subsp. Schizaphis graminum (strain Sg).